The primary structure comprises 458 residues: Carboxypeptidase N catalytic chain (458 aa).

The N-terminal stretch at 1 to 20 (MSDLLSVFLHLLLLFKLVAP) is a signal peptide. Positions 24–338 (RHHRYDDLVR…EALIQFLEQV (315 aa)) constitute a Peptidase M14 domain. A disulfide bridge links Cys42 with Cys104. Zn(2+)-binding residues include His86, Glu89, and His216. A disulfide bridge links Cys271 with Cys311. The active-site Proton donor/acceptor is the Glu308. O-linked (GalNAc...) threonine glycans are attached at residues Thr400, Thr402, and Thr409. The tract at residues 423-458 (SPVRRAPSRRHGVRAKVQPQARKKEMEMRQLQRGPA) is disordered.

It belongs to the peptidase M14 family. In terms of assembly, tetramer of two catalytic chains and two glycosylated inactive chains. Zn(2+) is required as a cofactor. As to expression, synthesized in the liver and secreted in plasma.

Its subcellular location is the secreted. The protein localises to the extracellular space. It carries out the reaction Release of a C-terminal basic amino acid, preferentially lysine.. Its function is as follows. Protects the body from potent vasoactive and inflammatory peptides containing C-terminal Arg or Lys (such as kinins or anaphylatoxins) which are released into the circulation. This chain is Carboxypeptidase N catalytic chain (CPN1), found in Homo sapiens (Human).